A 780-amino-acid polypeptide reads, in one-letter code: Replication origin-binding protein (780 aa).

The Helicase ATP-binding domain maps to 39 to 195; the sequence is SFENVRQPIK…AAFKPDTQIA (157 aa). Position 52–59 (52–59) interacts with ATP; it reads AAMGSGKT.

Belongs to the herpesviridae OriBP family.

In terms of biological role, probably involved in DNA replication. Binds the origin of replication (ori). This chain is Replication origin-binding protein (U73), found in Homo sapiens (Human).